We begin with the raw amino-acid sequence, 123 residues long: Small ribosomal subunit protein bS16 (123 aa).

A disordered region spans residues 87–123 (VKNNPVKAKPGKRAQERAAEKAQKVADAAAAAADAAE). Over residues 99–110 (RAQERAAEKAQK) the composition is skewed to basic and acidic residues. Positions 111–123 (VADAAAAAADAAE) are enriched in low complexity.

Belongs to the bacterial ribosomal protein bS16 family.

This chain is Small ribosomal subunit protein bS16, found in Rhizobium johnstonii (strain DSM 114642 / LMG 32736 / 3841) (Rhizobium leguminosarum bv. viciae).